A 275-amino-acid polypeptide reads, in one-letter code: MMANETAAKSTKSSPTPAVEPESKLKILALHGYRQNGDGFKSKLGSFRKFIGKHAELVFVTAPHIAPPLPDSEAGTEPDPAQRSWWFNKDDGTFKGTNKNGPAIGFEDSLKLVEKVWKQEQCCGLLGFSQGACFVGLLCDLSARGMTSIKPEFAVLSSGFRSGSLVHLNCYETKVQIPSLHIYGEADEIIPKEMSMALADTFTDPQILTHPGGHFLPAQASQKQTYVEFFRERLQFHLEAQEIENATAANSILVDDSGPAGNGVHDDDDDDDDSD.

Residues 1–21 (MMANETAAKSTKSSPTPAVEP) form a disordered region. Residues 7–16 (AAKSTKSSPT) show a composition bias toward polar residues. Residues serine 129, aspartate 187, and histidine 214 each act as charge relay system in the active site. Residues 253-275 (LVDDSGPAGNGVHDDDDDDDDSD) are disordered. The segment covering 266-275 (DDDDDDDDSD) has biased composition (acidic residues).

Belongs to the LovG family.

The protein is Esterase AAEL000016 of Aedes aegypti (Yellowfever mosquito).